We begin with the raw amino-acid sequence, 535 residues long: tRNA-2-methylthio-N(6)-dimethylallyladenosine synthase (535 aa).

In terms of domain architecture, MTTase N-terminal spans 24-139 (RTYEVRTFGC…LPRLLERARH (116 aa)). Residues C33, C68, C102, C176, C180, and C183 each contribute to the [4Fe-4S] cluster site. The 231-residue stretch at 162-392 (RDSSFSGWVS…IALQERISLE (231 aa)) folds into the Radical SAM core domain. Positions 395 to 465 (EKLIGRDVEL…PHYLIADAAG (71 aa)) constitute a TRAM domain. The segment at 512–535 (RTREPLTSPGVGTMPLYDPTDGQR) is disordered.

Belongs to the methylthiotransferase family. MiaB subfamily. As to quaternary structure, monomer. The cofactor is [4Fe-4S] cluster.

The protein resides in the cytoplasm. It catalyses the reaction N(6)-dimethylallyladenosine(37) in tRNA + (sulfur carrier)-SH + AH2 + 2 S-adenosyl-L-methionine = 2-methylsulfanyl-N(6)-dimethylallyladenosine(37) in tRNA + (sulfur carrier)-H + 5'-deoxyadenosine + L-methionine + A + S-adenosyl-L-homocysteine + 2 H(+). Its function is as follows. Catalyzes the methylthiolation of N6-(dimethylallyl)adenosine (i(6)A), leading to the formation of 2-methylthio-N6-(dimethylallyl)adenosine (ms(2)i(6)A) at position 37 in tRNAs that read codons beginning with uridine. The polypeptide is tRNA-2-methylthio-N(6)-dimethylallyladenosine synthase (Leifsonia xyli subsp. xyli (strain CTCB07)).